A 244-amino-acid chain; its full sequence is Putative outer membrane protein RC0105 (244 aa).

An N-terminal signal peptide occupies residues 1-23 (MLRIVKKLGIILFVSTISINSFA).

It belongs to the OmpW/AlkL family.

Its subcellular location is the cell outer membrane. The sequence is that of Putative outer membrane protein RC0105 from Rickettsia conorii (strain ATCC VR-613 / Malish 7).